The following is a 647-amino-acid chain: Macrolide export ATP-binding/permease protein MacB 2 (647 aa).

An ABC transporter domain is found at 6-244; it reads IQLKGIERRY…VTPTAAPAGK (239 aa). 42-49 contributes to the ATP binding site; that stretch reads GASGSGKS. Residues 223–247 form a disordered region; that stretch reads QEDSGRKPAAVPVTPTAAPAGKEGV. The span at 230–242 shows a compositional bias: low complexity; the sequence is PAAVPVTPTAAPA. Transmembrane regions (helical) follow at residues 273–293, 527–547, 581–601, and 610–630; these read FLTMLGIIIGIAAVVSVVALG, IAVISLIVGGVGVMNIMLVSV, LGGMLGVGVSLFIGLLFSLFV, and LFSILMAFGCSSLIGILFGYL.

The protein belongs to the ABC transporter superfamily. Macrolide exporter (TC 3.A.1.122) family. As to quaternary structure, homodimer. Part of the tripartite efflux system MacAB-TolC, which is composed of an inner membrane transporter, MacB, a periplasmic membrane fusion protein, MacA, and an outer membrane component, TolC. The complex forms a large protein conduit and can translocate molecules across both the inner and outer membranes. Interacts with MacA.

Its subcellular location is the cell inner membrane. Functionally, part of the tripartite efflux system MacAB-TolC. MacB is a non-canonical ABC transporter that contains transmembrane domains (TMD), which form a pore in the inner membrane, and an ATP-binding domain (NBD), which is responsible for energy generation. Confers resistance against macrolides. The sequence is that of Macrolide export ATP-binding/permease protein MacB 2 from Aeromonas hydrophila subsp. hydrophila (strain ATCC 7966 / DSM 30187 / BCRC 13018 / CCUG 14551 / JCM 1027 / KCTC 2358 / NCIMB 9240 / NCTC 8049).